Consider the following 247-residue polypeptide: Probable transcriptional regulatory protein lpg1286 (247 aa).

This sequence belongs to the TACO1 family.

It is found in the cytoplasm. The chain is Probable transcriptional regulatory protein lpg1286 from Legionella pneumophila subsp. pneumophila (strain Philadelphia 1 / ATCC 33152 / DSM 7513).